The chain runs to 203 residues: MIIKENSDKQTQIYNFLIEFTKSKGYPPSVREICQAVSLKSTSTVHGHLKRLEKKGLIYRDPTKPRALEIVELSNEEKELIDIPIVGKVTAGMPILATENIEDMFQIPINYVKHNNDLFILKVTGDSMIEAGILDGDLAIIEQKNIATNGDIVVALIENEATIKRFFKENGFIRLQPENKNYEPIIVEDCSILGKLVGIYRAY.

The H-T-H motif DNA-binding region spans 30–50 (VREICQAVSLKSTSTVHGHLK). Catalysis depends on for autocatalytic cleavage activity residues Ser-127 and Lys-164.

This sequence belongs to the peptidase S24 family. In terms of assembly, homodimer.

The catalysed reaction is Hydrolysis of Ala-|-Gly bond in repressor LexA.. Its function is as follows. Represses a number of genes involved in the response to DNA damage (SOS response), including recA and lexA. In the presence of single-stranded DNA, RecA interacts with LexA causing an autocatalytic cleavage which disrupts the DNA-binding part of LexA, leading to derepression of the SOS regulon and eventually DNA repair. This Clostridium perfringens (strain SM101 / Type A) protein is LexA repressor.